Here is a 343-residue protein sequence, read N- to C-terminus: tRNA-specific 2-thiouridylase MnmA (343 aa).

Residues 7-14 (ALSGGVDS) and Met-33 each bind ATP. Residue Cys-87 is the Nucleophile of the active site. A disulfide bridge connects residues Cys-87 and Cys-184. Gly-111 lines the ATP pocket. Positions 135-137 (KDQ) are interaction with tRNA. Catalysis depends on Cys-184, which acts as the Cysteine persulfide intermediate. Positions 289–290 (RY) are interaction with tRNA.

The protein belongs to the MnmA/TRMU family.

It is found in the cytoplasm. It carries out the reaction S-sulfanyl-L-cysteinyl-[protein] + uridine(34) in tRNA + AH2 + ATP = 2-thiouridine(34) in tRNA + L-cysteinyl-[protein] + A + AMP + diphosphate + H(+). Functionally, catalyzes the 2-thiolation of uridine at the wobble position (U34) of tRNA, leading to the formation of s(2)U34. This is tRNA-specific 2-thiouridylase MnmA from Desulforudis audaxviator (strain MP104C).